The chain runs to 222 residues: Riboflavin kinase (222 aa).

Residues 1 to 92 (MVLAEDLECL…CRLFAHEGGH (92 aa)) are H-T-H motif-like. Residues 93–222 (YTLPGIVISG…DRVNVEVAYD (130 aa)) are riboflavin kinase. 102 to 107 (GLGEGR) contributes to the CDP binding site. Positions 131 and 133 each coordinate Mg(2+). FMN-binding residues include serine 188 and glutamate 196. Residue 201 to 204 (VGLR) participates in CDP binding.

The protein belongs to the archaeal riboflavin kinase family. Requires Mg(2+) as cofactor.

The catalysed reaction is riboflavin + CTP = CDP + FMN + H(+). It participates in cofactor biosynthesis; FMN biosynthesis; FMN from riboflavin (CTP route): step 1/1. In terms of biological role, catalyzes the CTP-dependent phosphorylation of riboflavin (vitamin B2) to form flavin mononucleotide (FMN). The polypeptide is Riboflavin kinase (ribK) (Methanoregula boonei (strain DSM 21154 / JCM 14090 / 6A8)).